We begin with the raw amino-acid sequence, 305 residues long: NADH-cytochrome b5 reductase 1 (305 aa).

The chain crosses the membrane as a helical span at residues 8–28; that stretch reads VLLASLGVGLFTLFGLALGTY. One can recognise an FAD-binding FR-type domain in the interval 44-156; that stretch reads DEKYLLRLLD…RGPSGLLSYA (113 aa). Residues 136-166 and 175-210 contribute to the FAD site; these read DSLK…IQPN and VAKK…QCFL.

Belongs to the flavoprotein pyridine nucleotide cytochrome reductase family. FAD serves as cofactor.

It is found in the membrane. It carries out the reaction 2 Fe(III)-[cytochrome b5] + NADH = 2 Fe(II)-[cytochrome b5] + NAD(+) + H(+). NADH-cytochrome b5 reductases are involved in desaturation and elongation of fatty acids, cholesterol biosynthesis, drug metabolism, and, in erythrocyte, methemoglobin reduction. This is NADH-cytochrome b5 reductase 1 (Cyb5r1) from Rattus norvegicus (Rat).